We begin with the raw amino-acid sequence, 305 residues long: Sulfate adenylyltransferase subunit 2 (305 aa).

It belongs to the PAPS reductase family. CysD subfamily. In terms of assembly, heterodimer composed of CysD, the smaller subunit, and CysN.

The catalysed reaction is sulfate + ATP + H(+) = adenosine 5'-phosphosulfate + diphosphate. It participates in sulfur metabolism; hydrogen sulfide biosynthesis; sulfite from sulfate: step 1/3. Its function is as follows. With CysN forms the ATP sulfurylase (ATPS) that catalyzes the adenylation of sulfate producing adenosine 5'-phosphosulfate (APS) and diphosphate, the first enzymatic step in sulfur assimilation pathway. APS synthesis involves the formation of a high-energy phosphoric-sulfuric acid anhydride bond driven by GTP hydrolysis by CysN coupled to ATP hydrolysis by CysD. The protein is Sulfate adenylyltransferase subunit 2 of Pseudomonas entomophila (strain L48).